Reading from the N-terminus, the 35-residue chain is Tamulustoxin (35 aa).

3 disulfide bridges follow: C2–C22, C7–C31, and C11–C33.

In terms of tissue distribution, expressed by the venom gland.

Its subcellular location is the secreted. Blocks Kv1.6/KCNA6 potassium channels. The polypeptide is Tamulustoxin (Hottentotta tamulus (Eastern Indian scorpion)).